Reading from the N-terminus, the 219-residue chain is Small ribosomal subunit protein uS3 (219 aa).

The KH type-2 domain occupies 38–106 (IRKFIEKRLV…RVHINIVEIK (69 aa)).

This sequence belongs to the universal ribosomal protein uS3 family. In terms of assembly, part of the 30S ribosomal subunit. Forms a tight complex with proteins S10 and S14.

In terms of biological role, binds the lower part of the 30S subunit head. Binds mRNA in the 70S ribosome, positioning it for translation. The polypeptide is Small ribosomal subunit protein uS3 (Levilactobacillus brevis (strain ATCC 367 / BCRC 12310 / CIP 105137 / JCM 1170 / LMG 11437 / NCIMB 947 / NCTC 947) (Lactobacillus brevis)).